We begin with the raw amino-acid sequence, 601 residues long: Aspartate--tRNA ligase (601 aa).

Glu183 contributes to the L-aspartate binding site. The aspartate stretch occupies residues Gln207–Lys210. Arg229 contacts L-aspartate. Residues Arg229–Glu231 and Gln238 contribute to the ATP site. Residue His457 coordinates L-aspartate. Residue Glu497 participates in ATP binding. Position 504 (Arg504) interacts with L-aspartate. Gly549–Arg552 is an ATP binding site.

This sequence belongs to the class-II aminoacyl-tRNA synthetase family. Type 1 subfamily. In terms of assembly, homodimer.

It is found in the cytoplasm. The catalysed reaction is tRNA(Asp) + L-aspartate + ATP = L-aspartyl-tRNA(Asp) + AMP + diphosphate. Its function is as follows. Catalyzes the attachment of L-aspartate to tRNA(Asp) in a two-step reaction: L-aspartate is first activated by ATP to form Asp-AMP and then transferred to the acceptor end of tRNA(Asp). The chain is Aspartate--tRNA ligase from Leptospira interrogans serogroup Icterohaemorrhagiae serovar copenhageni (strain Fiocruz L1-130).